The chain runs to 316 residues: MNELDGIKQFTTVVADSGDIESIRHYHPQDATTNPSLLLKAAGLSQYEHLIDDAIAWGKKNGKTQEQQVVAACDKLAVNFGAEILKIVPGRVSTEVDARLSFDKEKSIEKARHLVDLYQQQGVEKSRILIKLASTWEGIRAAEELEKEGINCNLTLLFSFAQARACAEAGVFLISPFVGRIYDWYQARKPMDPYVVEEDPGVKSVRNIYDYYKQHHYETIVMGASFRRTEQILALTGCDRLTIAPNLLKELQEKVSPVVRKLIPPSQTFPRPAPMSEAEFRWEHNQDAMAVEKLSEGIRLFAVDQRKLEDLLAAKL.

The Schiff-base intermediate with substrate role is filled by K131.

Belongs to the transaldolase family. Type 1 subfamily. As to quaternary structure, homodimer.

The protein localises to the cytoplasm. The catalysed reaction is D-sedoheptulose 7-phosphate + D-glyceraldehyde 3-phosphate = D-erythrose 4-phosphate + beta-D-fructose 6-phosphate. It participates in carbohydrate degradation; pentose phosphate pathway; D-glyceraldehyde 3-phosphate and beta-D-fructose 6-phosphate from D-ribose 5-phosphate and D-xylulose 5-phosphate (non-oxidative stage): step 2/3. Functionally, transaldolase is important for the balance of metabolites in the pentose-phosphate pathway. The sequence is that of Transaldolase A (talA) from Escherichia coli O157:H7.